Here is a 308-residue protein sequence, read N- to C-terminus: uncharacterized protein (308 aa).

One can recognise an HTH lysR-type domain in the interval 1–60; the sequence is MNYSLKQLKVFVTVAQEKSFSRAGERIGLSQSAVSHSVKELENHTGVRLLDRTTREVVLT. A DNA-binding region (H-T-H motif) is located at residues 20–39; it reads FSRAGERIGLSQSAVSHSVK.

The protein belongs to the LysR transcriptional regulatory family.

This is an uncharacterized protein from Shigella flexneri.